Here is a 478-residue protein sequence, read N- to C-terminus: POU domain, class 2, transcription factor 2 (478 aa).

5 disordered regions span residues 1–82 (MVHS…PPQA), 167–199 (QAVT…EASD), 275–298 (SSLP…GRRR), 357–391 (PCSA…PLSQ), and 409–478 (TLHP…PYQP). The segment covering 12–37 (RMSKPLEAEKQGLDSPSEHTDTERNG) has biased composition (basic and acidic residues). A compositionally biased stretch (polar residues) spans 38–60 (PDTNHQNPQNKTSPFSVSPTGPS). The 75-residue stretch at 195 to 269 (EEASDLEELE…LLEKWLNDAE (75 aa)) folds into the POU-specific domain. The segment covering 275-285 (SSLPSPNQLSR) has biased composition (polar residues). Positions 297–356 (RRKKRTSIETNVRFALEKSFLANQKPTSEEILLIAEQLHMEKEVIRVWFCNRRQKEKRIN) form a DNA-binding region, homeobox. Positions 389–410 (LSQASSSLSTTVTTLSSAVGTL) are leucine-zipper. Over residues 416 to 425 (AGGGAAGGGA) the composition is skewed to gly residues.

It belongs to the POU transcription factor family. Class-2 subfamily. As to quaternary structure, interacts with NR3C1, AR and PGR. Interacts with POU2AF1; the interaction increases POU2F2 transactivation activity. As to expression, predominantly expressed in B-cells.

The protein localises to the nucleus. With respect to regulation, transactivation activity is enhanced by transcriptional coactivator POU2AF1. In terms of biological role, transcription factor that specifically binds to the octamer motif (5'-ATTTGCAT-3'). Regulates IL6 expression in B cells with POU2AF1. Regulates transcription in a number of tissues in addition to activating immunoglobulin gene expression. Modulates transcription transactivation by NR3C1, AR and PGR. The chain is POU domain, class 2, transcription factor 2 (POU2F2) from Sus scrofa (Pig).